The sequence spans 183 residues: Capsid protein (183 aa).

The interval 136–183 is disordered; it reads NAPILSTLPETTVVRRRGRSPRRRTPSPRRRRSQSPRRRRSQSRESQC. The span at 149–176 shows a compositional bias: basic residues; that stretch reads VRRRGRSPRRRTPSPRRRRSQSPRRRRS. 3 positions are modified to phosphoserine; by host: S155, S162, and S170. One copy of the 1; half-length repeat lies at 155 to 161; that stretch reads SPRRRTP. Residues 155 to 177 form a 3 X 8 AA repeats of S-P-R-R-R-[PR]-S-Q region; the sequence is SPRRRTPSPRRRRSQSPRRRRSQ. Positions 158 to 175 match the Bipartite nuclear localization signal motif; it reads RRTPSPRRRRSQSPRRRR. A run of 2 repeats spans residues 162 to 169 and 170 to 177. Residues 177–183 form an RNA binding region; sequence QSRESQC.

This sequence belongs to the orthohepadnavirus core antigen family. Homodimerizes, then multimerizes. Interacts with cytosol exposed regions of viral L glycoprotein present in the reticulum-to-Golgi compartment. Interacts with human FLNB. Phosphorylated form interacts with host importin alpha; this interaction depends on the exposure of the NLS, which itself depends upon genome maturation and/or phosphorylation of the capsid protein. Interacts with host NUP153. In terms of processing, phosphorylated by host SRPK1, SRPK2, and maybe protein kinase C or GAPDH. Phosphorylation is critical for pregenomic RNA packaging. Protein kinase C phosphorylation is stimulated by HBx protein and may play a role in transport of the viral genome to the nucleus at the late step during the viral replication cycle.

Its subcellular location is the virion. The protein resides in the host cytoplasm. In terms of biological role, self assembles to form an icosahedral capsid. Most capsids appear to be large particles with an icosahedral symmetry of T=4 and consist of 240 copies of capsid protein, though a fraction forms smaller T=3 particles consisting of 180 capsid proteins. Entering capsids are transported along microtubules to the nucleus. Phosphorylation of the capsid is thought to induce exposure of nuclear localization signal in the C-terminal portion of the capsid protein that allows binding to the nuclear pore complex via the importin (karyopherin-) alpha and beta. Capsids are imported in intact form through the nuclear pore into the nuclear basket, where it probably binds NUP153. Only capsids that contain the mature viral genome can release the viral DNA and capsid protein into the nucleoplasm. Immature capsids get stuck in the basket. Capsids encapsulate the pre-genomic RNA and the P protein. Pre-genomic RNA is reverse-transcribed into DNA while the capsid is still in the cytoplasm. The capsid can then either be directed to the nucleus, providing more genomes for transcription, or bud through the endoplasmic reticulum to provide new virions. The chain is Capsid protein from Hepatitis B virus genotype B/C subtype adw (isolate Okinawa/pODW282/1998) (HBV-B).